The sequence spans 102 residues: NADH-quinone oxidoreductase subunit K (102 aa).

3 helical membrane-spanning segments follow: residues 6-26 (LGQG…GVLV), 30-50 (LLFM…AFIV), and 64-84 (FILV…LILL).

It belongs to the complex I subunit 4L family. NDH-1 is composed of 14 different subunits. Subunits NuoA, H, J, K, L, M, N constitute the membrane sector of the complex.

The protein localises to the cell inner membrane. The enzyme catalyses a quinone + NADH + 5 H(+)(in) = a quinol + NAD(+) + 4 H(+)(out). Functionally, NDH-1 shuttles electrons from NADH, via FMN and iron-sulfur (Fe-S) centers, to quinones in the respiratory chain. The immediate electron acceptor for the enzyme in this species is believed to be ubiquinone. Couples the redox reaction to proton translocation (for every two electrons transferred, four hydrogen ions are translocated across the cytoplasmic membrane), and thus conserves the redox energy in a proton gradient. This is NADH-quinone oxidoreductase subunit K from Acidiphilium cryptum (strain JF-5).